A 262-amino-acid polypeptide reads, in one-letter code: VPS74-like protein DDB_G0288371 (262 aa).

It belongs to the GOLPH3/VPS74 family.

It localises to the golgi apparatus. It is found in the golgi stack membrane. Phosphatidylinositol-4-phosphate-binding protein that links Golgi membranes to the cytoskeleton and may participate in the tensile force required for vesicle budding from the Golgi. Thereby, may play a role in Golgi membrane trafficking. May also bind to the coatomer to regulate Golgi membrane trafficking. May play a role in anterograde transport from the Golgi to the plasma membrane and regulate secretion. May be involved in vacuolar protein sorting. The chain is VPS74-like protein DDB_G0288371 from Dictyostelium discoideum (Social amoeba).